A 1049-amino-acid polypeptide reads, in one-letter code: Retinoblastoma-like protein 1 (1049 aa).

Residues threonine 332, threonine 369, and threonine 385 each carry the phosphothreonine modification. A domain A region spans residues 385–584 (TPVASATQSV…WEALRASANK (200 aa)). The segment at 385 to 944 (TPVASATQSV…GRVKSFALKY (560 aa)) is pocket; binds T and E1A. Residues 585 to 779 (VPSCEEVIFP…TQDAPLTGIS (195 aa)) form a spacer region. 4 positions are modified to phosphoserine: serine 640, serine 650, serine 748, and serine 761. The segment at 780 to 944 (KPKRTGSLAL…GRVKSFALKY (165 aa)) is domain B. 3 positions are modified to phosphoserine: serine 959, serine 970, and serine 983. Threonine 992 is subject to Phosphothreonine. 2 positions are modified to phosphoserine: serine 1004 and serine 1022.

Belongs to the retinoblastoma protein (RB) family. As to quaternary structure, component of the DREAM complex (also named LINC complex) at least composed of E2F4, E2F5, LIN9, LIN37, LIN52, LIN54, MYBL1, MYBL2, RBL1, RBL2, RBBP4, TFDP1 and TFDP2. The complex exists in quiescent cells where it represses cell cycle-dependent genes. It dissociates in S phase when LIN9, LIN37, LIN52 and LIN54 form a subcomplex that binds to MYBL2. Interacts with AATF. Interacts with KDM5A. Interacts with KMT5B and KMT5C. Interacts with USP4. Interacts with RBBP9. Post-translationally, cell-cycle arrest properties are inactivated by phosphorylation on Thr-332, Ser-640, Ser-959 and Ser-970 by CDK4.

Its subcellular location is the nucleus. Key regulator of entry into cell division. Directly involved in heterochromatin formation by maintaining overall chromatin structure and, in particular, that of constitutive heterochromatin by stabilizing histone methylation. Recruits and targets histone methyltransferases KMT5B and KMT5C, leading to epigenetic transcriptional repression. Controls histone H4 'Lys-20' trimethylation. Probably acts as a transcription repressor by recruiting chromatin-modifying enzymes to promoters. Potent inhibitor of E2F-mediated trans-activation. May act as a tumor suppressor. This is Retinoblastoma-like protein 1 from Rattus norvegicus (Rat).